We begin with the raw amino-acid sequence, 207 residues long: Cytochrome c biogenesis ATP-binding export protein CcmA (207 aa).

Residues 2–204 (LEVKNLTAIR…NPKLRKIRLG (203 aa)) form the ABC transporter domain. Residue 34-41 (GRNGTGKT) participates in ATP binding.

The protein belongs to the ABC transporter superfamily. CcmA exporter (TC 3.A.1.107) family. The complex is composed of two ATP-binding proteins (CcmA) and two transmembrane proteins (CcmB).

The protein resides in the cell inner membrane. The catalysed reaction is heme b(in) + ATP + H2O = heme b(out) + ADP + phosphate + H(+). Its function is as follows. Part of the ABC transporter complex CcmAB involved in the biogenesis of c-type cytochromes; once thought to export heme, this seems not to be the case, but its exact role is uncertain. Responsible for energy coupling to the transport system. This chain is Cytochrome c biogenesis ATP-binding export protein CcmA, found in Vibrio cholerae serotype O1 (strain ATCC 39315 / El Tor Inaba N16961).